Here is a 372-residue protein sequence, read N- to C-terminus: Nickel transporter NicT (372 aa).

The next 8 membrane-spanning stretches (helical) occupy residues 30–50 (LMFAVIVALHLVGWLTVTLLV), 55–75 (LSLGGKAFGIGVGLTAYTLGL), 104–124 (VGFFFSLGHSTVVFGLAVMLV), 152–172 (ISGAFLYLIGILNVIVLVGIV), 218–238 (VGFLFGLGFDTATEIALLVLA), 245–265 (GLPWYAILCLPVLFAAGMCLL), 294–314 (VTGLSVAVALLIGSVELLGLI), and 335–355 (TVGFVVVAMFALTWAIALLVW).

This sequence belongs to the NiCoT transporter (TC 2.A.52) family.

It is found in the cell membrane. It carries out the reaction Ni(2+)(in) = Ni(2+)(out). Export of the fluoroquinolone antibiotic norfloxacin is inhibited by the proton ionophore carbonyl cyanide m-chlorophenylhydrazone (CCCP). Nickel may influence the extrusion of antibiotics possibly by facilitating the proton motive force-dependent efflux process. In terms of biological role, involved in nickel uptake. In addition, acts as a drug efflux pump and contributes to moderate tolerance towards different classes of antibiotics, including fluoroquinolones, aminoglycosides and the anti-TB drug isoniazid, with a preference for fluoroquinolones. The drug efflux function is probably dependent on proton motive force (pmf) or ion gradient, and might be facilitated by the presence of Ni(2+) ions. This is Nickel transporter NicT from Mycobacterium tuberculosis (strain ATCC 25618 / H37Rv).